Here is a 187-residue protein sequence, read N- to C-terminus: uncharacterized protein (187 aa).

Residues 53-187 (RKPHIYSPAD…CLQTSYVVPG (135 aa)) enclose the Tyr recombinase domain. Catalysis depends on residues arginine 98 and lysine 123.

This sequence belongs to the 'phage' integrase family.

This is an uncharacterized protein from Sinorhizobium fredii (strain NBRC 101917 / NGR234).